Reading from the N-terminus, the 774-residue chain is Lysyl oxidase homolog 2 (774 aa).

The signal sequence occupies residues 1-25; that stretch reads MERRGSSCLCRCLALLALLPTLSLA. 4 SRCR domains span residues 58–159, 188–302, 326–425, and 435–544; these read LRLA…VVCS, IRAI…VSCV, VRLR…VRCN, and LRLN…VACS. Disulfide bonds link Cys84/Cys148, Cys97/Cys158, Cys128/Cys138, Cys218/Cys291, Cys231/Cys301, Cys265/Cys275, Cys351/Cys414, Cys364/Cys424, and Cys395/Cys405. Residue Asn288 is glycosylated (N-linked (GlcNAc...) asparagine). Asn455 carries N-linked (GlcNAc...) asparagine glycosylation. Disulfide bonds link Cys464/Cys530, Cys477/Cys543, and Cys511/Cys521. A lysyl-oxidase like region spans residues 548–751; that stretch reads PDLVLNAEIV…WMYNCHIGGS (204 aa). Ca(2+) is bound by residues Asp549 and Leu550. Cystine bridges form between Cys573–Cys625, Cys579–Cys695, Cys657–Cys673, and Cys663–Cys685. Cu cation-binding residues include His626, His628, and His630. Asn644 is a glycosylation site (N-linked (GlcNAc...) asparagine). The segment at residues 653-689 is a cross-link (lysine tyrosylquinone (Lys-Tyr)); that stretch reads KASFCLEDTECEGDIQKSYECANFGEQGITMGCWDMY. 2',4',5'-topaquinone is present on Tyr689. Ca(2+) is bound by residues Glu722, Asp724, Asn727, and Asn728. Cys732 and Cys746 form a disulfide bridge.

Belongs to the lysyl oxidase family. In terms of assembly, component of some chromatin repressor complex. Interacts with SNAI1. Interacts with TAF10. Interacts with HSPA5. Interacts with EFEMP2. The cofactor is Cu cation. Requires lysine tyrosylquinone residue as cofactor. The lysine tyrosylquinone cross-link (LTQ) is generated by condensation of the epsilon-amino group of a lysine with a topaquinone produced by oxidation of tyrosine. Post-translationally, N-glycosylated. N-glycosylation on Asn-455 and Asn-644 may be essential for proper folding and secretion; may be composed of a fucosylated carbohydrates attached to a trimannose N-linked glycan core.

Its subcellular location is the secreted. It localises to the extracellular space. It is found in the extracellular matrix. The protein localises to the basement membrane. The protein resides in the nucleus. Its subcellular location is the chromosome. It localises to the endoplasmic reticulum. The enzyme catalyses L-lysyl-[protein] + O2 + H2O = (S)-2-amino-6-oxohexanoyl-[protein] + H2O2 + NH4(+). Its activity is regulated as follows. Specifically inhibited by a mouse monoclonal antibody AB0023, inhibition occurs in a non-competitive manner. Its function is as follows. Mediates the post-translational oxidative deamination of lysine residues on target proteins leading to the formation of deaminated lysine (allysine). Acts as a transcription corepressor and specifically mediates deamination of trimethylated 'Lys-4' of histone H3 (H3K4me3), a specific tag for epigenetic transcriptional activation. Shows no activity against histone H3 when it is trimethylated on 'Lys-9' (H3K9me3) or 'Lys-27' (H3K27me3) or when 'Lys-4' is monomethylated (H3K4me1) or dimethylated (H3K4me2). Also mediates deamination of methylated TAF10, a member of the transcription factor IID (TFIID) complex, which induces release of TAF10 from promoters, leading to inhibition of TFIID-dependent transcription. LOXL2-mediated deamination of TAF10 results in transcriptional repression of genes required for embryonic stem cell pluripotency including POU5F1/OCT4, NANOG, KLF4 and SOX2. Involved in epithelial to mesenchymal transition (EMT) via interaction with SNAI1 and participates in repression of E-cadherin CDH1, probably by mediating deamination of histone H3. During EMT, involved with SNAI1 in negatively regulating pericentromeric heterochromatin transcription. SNAI1 recruits LOXL2 to pericentromeric regions to oxidize histone H3 and repress transcription which leads to release of heterochromatin component CBX5/HP1A, enabling chromatin reorganization and acquisition of mesenchymal traits. Interacts with the endoplasmic reticulum protein HSPA5 which activates the IRE1-XBP1 pathway of the unfolded protein response, leading to expression of several transcription factors involved in EMT and subsequent EMT induction. When secreted into the extracellular matrix, promotes cross-linking of extracellular matrix proteins by mediating oxidative deamination of peptidyl lysine residues in precursors to fibrous collagen and elastin. Acts as a regulator of sprouting angiogenesis, probably via collagen IV scaffolding. Acts as a regulator of chondrocyte differentiation, probably by regulating expression of factors that control chondrocyte differentiation. The protein is Lysyl oxidase homolog 2 (LOXL2) of Bos taurus (Bovine).